We begin with the raw amino-acid sequence, 749 residues long: MAGVPAPASQLTKVLAGLRHTFVVADATLPDCPLVYASEGFYAMTGYGPDEVLGHNCRFLQGEGTDPKEVQKIRDAIKKGEACSVRLLNYRKDGTPFWNLLTVTPIKTPDGRVSKFVGVQVDVTSKTEGKALADNSGVPLLVKYDHRLRDNVARTIVDDVTIAVEKAEGVEPGQASAVAAAAPLGAKGPRGTAPKSFPRVALDLATTVERIQQNFCISDPTLPDCPIVFASDAFLELTGYSREEVLGRNCRFLQGAGTDRGTVDQIRAAIKEGSELTVRILNYTKAGKAFWNMFTLAPMRDQDGHARFFVGVQVDVTAQSTSPDKAPVWNKTPEEEVAKAKMGAEAASLISSALQGMAAPTTANPWAAISGVIMRRKPHKADDKAYQALLQLQERDGKMKLMHFRRVKQLGAGDVGLVDLVQLQGSELKFAMKTLDKFEMQERNKVARVLTESAILAAVDHPFLATLYCTIQTDTHLHFVMEYCDGGELYGLLNSQPKKRLKEEHVRFYASEVLTALQYLHLLGYVYRDLKPENILLHHTGHVLLTDFDLSYSKGSTTPRIEKIGGAGAAGGSAPKSPKKSSSKSGGSSSGSALQLENYLLLAEPSARANSFVGTEEYLAPEVINAAGHGPAVDWWSLGILIFELLYGTTPFRGARRDETFENIIKSPLKFPSKPAVSEECRDLIEKLLVKDVGARLGSRTGANEIKSHPWFKGINWALLRHQQPPYVPRRASKAAGGSSTGGAAFDNY.

In terms of domain architecture, PAS 1 spans 7-80 (PASQLTKVLA…QKIRDAIKKG (74 aa)). FMN contacts are provided by residues 56-61 (NCRFLQ), Arg-74, Asn-89, Asn-99, and Gln-120. Cys-57 carries the post-translational modification S-4a-FMN cysteine. Residues 81-135 (EACSVRLLNYRKDGTPFWNLLTVTPIKTPDGRVSKFVGVQVDVTSKTEGKALADN) form the PAC 1 domain. The region spanning 200–273 (VALDLATTVE…DQIRAAIKEG (74 aa)) is the PAS 2 domain. A PAC 2 domain is found at 274–328 (SELTVRILNYTKAGKAFWNMFTLAPMRDQDGHARFFVGVQVDVTAQSTSPDKAPV). Residues 404 to 712 (FRRVKQLGAG…ANEIKSHPWF (309 aa)) form the Protein kinase domain. Residues 410–418 (LGAGDVGLV) and Lys-433 contribute to the ATP site. Asp-529 (proton acceptor) is an active-site residue. Disordered regions lie at residues 563 to 591 (KIGG…SSSG) and 729 to 749 (PRRA…FDNY). The AGC-kinase C-terminal domain occupies 713–749 (KGINWALLRHQQPPYVPRRASKAAGGSSTGGAAFDNY). Low complexity predominate over residues 734–749 (KAAGGSSTGGAAFDNY).

This sequence belongs to the protein kinase superfamily. AGC Ser/Thr protein kinase family. It depends on FMN as a cofactor. Post-translationally, autophosphorylated in response to blue light irradiation. 2 molecules of FMN bind covalently to cysteines after exposure to blue light and are reversed in the dark. In terms of tissue distribution, expressed in gametes, pre-gametes and gametes generated by pre-gametes (at protein level).

The protein resides in the membrane. It carries out the reaction L-seryl-[protein] + ATP = O-phospho-L-seryl-[protein] + ADP + H(+). The enzyme catalyses L-threonyl-[protein] + ATP = O-phospho-L-threonyl-[protein] + ADP + H(+). Its function is as follows. Protein kinase that acts as a blue light photoreceptor. Required for non-photochemical quenching (NPQ), a mechanism that converts and dissipates the harmful excess absorbed light energy into heat and protect the photosynthetic apparatus from photo-oxidative damage. Controls the energy-dependent chlorophyll fluorescence quenching (qE) activity of chlorophyll excited states by inducing the expression of the qE effector protein LHCSR3 in high light intensities. The protein is Phototropin of Chlamydomonas reinhardtii (Chlamydomonas smithii).